Consider the following 650-residue polypeptide: DNA ligase (650 aa).

Residues D30–D34 and S79–L80 contribute to the NAD(+) site. K110 (N6-AMP-lysine intermediate) is an active-site residue. R131, E165, and K304 together coordinate NAD(+). The Zn(2+) site is built by C398, C401, C414, and C419. The 78-residue stretch at D573–K650 folds into the BRCT domain.

Belongs to the NAD-dependent DNA ligase family. LigA subfamily. It depends on Mg(2+) as a cofactor. Requires Mn(2+) as cofactor.

It carries out the reaction NAD(+) + (deoxyribonucleotide)n-3'-hydroxyl + 5'-phospho-(deoxyribonucleotide)m = (deoxyribonucleotide)n+m + AMP + beta-nicotinamide D-nucleotide.. Functionally, DNA ligase that catalyzes the formation of phosphodiester linkages between 5'-phosphoryl and 3'-hydroxyl groups in double-stranded DNA using NAD as a coenzyme and as the energy source for the reaction. It is essential for DNA replication and repair of damaged DNA. The sequence is that of DNA ligase from Helicobacter hepaticus (strain ATCC 51449 / 3B1).